A 245-amino-acid chain; its full sequence is Glycerophosphodiester phosphodiesterase (245 aa).

The 240-residue stretch at 2–241 folds into the GP-PDE domain; sequence TKIFAHRGFK…DFPDRAVKIR (240 aa). Histidine 7 (proton acceptor) is an active-site residue. Residues glutamate 34 and aspartate 36 each coordinate a divalent metal cation. The Proton donor role is filled by histidine 49. Residue glutamate 110 coordinates a divalent metal cation.

It belongs to the glycerophosphoryl diester phosphodiesterase family. The cofactor is Ni(2+). Co(2+) serves as cofactor. Requires Mn(2+) as cofactor.

The catalysed reaction is a sn-glycero-3-phosphodiester + H2O = an alcohol + sn-glycerol 3-phosphate + H(+). Inhibited by EDTA and various organic solvents such as chloroform, toluene or benzene. Glycerophosphodiester phosphodiesterase hydrolyzes glycerophosphodiesters into glycerol-3-phosphate (G3P) and the corresponding alcohol. Can hydrolyze the model substrate bis-(p-nitrophenyl phosphate) (bis(pNPP)) to p-nitrophenol. Can also catalyze the degradation of diphenyl phosphate (DPHP) to phenyl phosphate (PHP). DPHP is an aryl phosphate ester used as a chemical additive and an industrial catalyst that can easily spread to the environment and exhibits toxicity toward organisms. This is Glycerophosphodiester phosphodiesterase from Bacillus altitudinis.